Reading from the N-terminus, the 135-residue chain is uncharacterized protein (135 aa).

The tract at residues 1–70 (MKPDWPRRGA…RWRPQGTGTG (70 aa)) is disordered.

This is an uncharacterized protein from Homo sapiens (Human).